The primary structure comprises 586 residues: Phosphomethylpyrimidine synthase (586 aa).

The tract at residues M1–G58 is disordered. Basic and acidic residues predominate over residues V22–E39. Substrate is bound by residues N193, M222, Y251, H287, S307 to G309, D348 to R351, and E387. A Zn(2+)-binding site is contributed by H391. Residue Y414 coordinates substrate. Residue H455 participates in Zn(2+) binding. [4Fe-4S] cluster-binding residues include C535, C538, and C543.

The protein belongs to the ThiC family. [4Fe-4S] cluster is required as a cofactor.

The catalysed reaction is 5-amino-1-(5-phospho-beta-D-ribosyl)imidazole + S-adenosyl-L-methionine = 4-amino-2-methyl-5-(phosphooxymethyl)pyrimidine + CO + 5'-deoxyadenosine + formate + L-methionine + 3 H(+). It participates in cofactor biosynthesis; thiamine diphosphate biosynthesis. Catalyzes the synthesis of the hydroxymethylpyrimidine phosphate (HMP-P) moiety of thiamine from aminoimidazole ribotide (AIR) in a radical S-adenosyl-L-methionine (SAM)-dependent reaction. The polypeptide is Phosphomethylpyrimidine synthase (Bacillus anthracis (strain A0248)).